The chain runs to 126 residues: Aspartate 1-decarboxylase (126 aa).

Serine 25 (schiff-base intermediate with substrate; via pyruvic acid) is an active-site residue. A Pyruvic acid (Ser) modification is found at serine 25. Threonine 57 is a substrate binding site. Tyrosine 58 serves as the catalytic Proton donor. Glycine 73–alanine 75 provides a ligand contact to substrate.

The protein belongs to the PanD family. As to quaternary structure, heterooctamer of four alpha and four beta subunits. Pyruvate serves as cofactor. Post-translationally, is synthesized initially as an inactive proenzyme, which is activated by self-cleavage at a specific serine bond to produce a beta-subunit with a hydroxyl group at its C-terminus and an alpha-subunit with a pyruvoyl group at its N-terminus.

It is found in the cytoplasm. It carries out the reaction L-aspartate + H(+) = beta-alanine + CO2. Its pathway is cofactor biosynthesis; (R)-pantothenate biosynthesis; beta-alanine from L-aspartate: step 1/1. Functionally, catalyzes the pyruvoyl-dependent decarboxylation of aspartate to produce beta-alanine. This Xanthomonas campestris pv. campestris (strain B100) protein is Aspartate 1-decarboxylase.